The primary structure comprises 306 residues: Tyrosine recombinase XerC (306 aa).

In terms of domain architecture, Core-binding (CB) spans 10–94; sequence ARCHSYLQQF…AVKQWGEFLL (85 aa). A Tyr recombinase domain is found at 115–294; it reads PLPKNIDVDS…DFQHLAKVYD (180 aa). Active-site residues include R154, K178, H246, R249, and H272. Y281 (O-(3'-phospho-DNA)-tyrosine intermediate) is an active-site residue.

The protein belongs to the 'phage' integrase family. XerC subfamily. In terms of assembly, forms a cyclic heterotetrameric complex composed of two molecules of XerC and two molecules of XerD.

Its subcellular location is the cytoplasm. Its function is as follows. Site-specific tyrosine recombinase, which acts by catalyzing the cutting and rejoining of the recombining DNA molecules. The XerC-XerD complex is essential to convert dimers of the bacterial chromosome into monomers to permit their segregation at cell division. It also contributes to the segregational stability of plasmids. This Shewanella oneidensis (strain ATCC 700550 / JCM 31522 / CIP 106686 / LMG 19005 / NCIMB 14063 / MR-1) protein is Tyrosine recombinase XerC.